Here is a 320-residue protein sequence, read N- to C-terminus: Ribosomal large subunit pseudouridine synthase C (320 aa).

Residues 20–83 (QRIDNFLLAK…AEREEVQVSA (64 aa)) enclose the S4 RNA-binding domain. Residue Asp-144 is part of the active site.

It belongs to the pseudouridine synthase RluA family.

The enzyme catalyses uridine(955/2504/2580) in 23S rRNA = pseudouridine(955/2504/2580) in 23S rRNA. Responsible for synthesis of pseudouridine from uracil at positions 955, 2504 and 2580 in 23S ribosomal RNA. The polypeptide is Ribosomal large subunit pseudouridine synthase C (rluC) (Yersinia pestis).